Reading from the N-terminus, the 165-residue chain is Peptide deformylase (165 aa).

2 residues coordinate Fe cation: Cys-88 and His-130. The active site involves Glu-131. His-134 provides a ligand contact to Fe cation.

This sequence belongs to the polypeptide deformylase family. It depends on Fe(2+) as a cofactor.

The catalysed reaction is N-terminal N-formyl-L-methionyl-[peptide] + H2O = N-terminal L-methionyl-[peptide] + formate. In terms of biological role, removes the formyl group from the N-terminal Met of newly synthesized proteins. Requires at least a dipeptide for an efficient rate of reaction. N-terminal L-methionine is a prerequisite for activity but the enzyme has broad specificity at other positions. In Borreliella burgdorferi (strain ATCC 35210 / DSM 4680 / CIP 102532 / B31) (Borrelia burgdorferi), this protein is Peptide deformylase.